A 373-amino-acid polypeptide reads, in one-letter code: 4-hydroxy-3-methylbut-2-en-1-yl diphosphate synthase (flavodoxin) (373 aa).

The [4Fe-4S] cluster site is built by cysteine 270, cysteine 273, cysteine 305, and glutamate 312.

The protein belongs to the IspG family. Requires [4Fe-4S] cluster as cofactor.

It carries out the reaction (2E)-4-hydroxy-3-methylbut-2-enyl diphosphate + oxidized [flavodoxin] + H2O + 2 H(+) = 2-C-methyl-D-erythritol 2,4-cyclic diphosphate + reduced [flavodoxin]. The protein operates within isoprenoid biosynthesis; isopentenyl diphosphate biosynthesis via DXP pathway; isopentenyl diphosphate from 1-deoxy-D-xylulose 5-phosphate: step 5/6. Its function is as follows. Converts 2C-methyl-D-erythritol 2,4-cyclodiphosphate (ME-2,4cPP) into 1-hydroxy-2-methyl-2-(E)-butenyl 4-diphosphate. The sequence is that of 4-hydroxy-3-methylbut-2-en-1-yl diphosphate synthase (flavodoxin) from Sodalis glossinidius (strain morsitans).